A 628-amino-acid polypeptide reads, in one-letter code: Chaperone protein DnaK (628 aa).

Thr-174 carries the phosphothreonine; by autocatalysis modification. The disordered stretch occupies residues 589 to 628 (AAGGAGPDMGAGAGPDMGAGASNGSAPYGDDVVDGDYKEV). Residues 591–605 (GGAGPDMGAGAGPDM) show a composition bias toward gly residues.

This sequence belongs to the heat shock protein 70 family.

Its function is as follows. Acts as a chaperone. This chain is Chaperone protein DnaK, found in Lachnospira eligens (strain ATCC 27750 / DSM 3376 / VPI C15-48 / C15-B4) (Eubacterium eligens).